Reading from the N-terminus, the 86-residue chain is Putative membrane protein insertion efficiency factor (86 aa).

Belongs to the UPF0161 family.

The protein localises to the cell inner membrane. Could be involved in insertion of integral membrane proteins into the membrane. The polypeptide is Putative membrane protein insertion efficiency factor (Mannheimia succiniciproducens (strain KCTC 0769BP / MBEL55E)).